A 274-amino-acid polypeptide reads, in one-letter code: Pyrroline-5-carboxylate reductase 3 (274 aa).

Alanine 2 bears the N-acetylalanine mark.

The protein belongs to the pyrroline-5-carboxylate reductase family. Homodecamer; composed of 5 homodimers.

The protein localises to the cytoplasm. It carries out the reaction L-proline + NADP(+) = (S)-1-pyrroline-5-carboxylate + NADPH + 2 H(+). It catalyses the reaction L-proline + NAD(+) = (S)-1-pyrroline-5-carboxylate + NADH + 2 H(+). Its pathway is amino-acid biosynthesis; L-proline biosynthesis; L-proline from L-glutamate 5-semialdehyde: step 1/1. Functionally, oxidoreductase that catalyzes the last step in proline biosynthesis, which corresponds to the reduction of pyrroline-5-carboxylate (P5C) to L-proline using NAD(P)H. Proline is synthesized from either glutamate or ornithine; both are converted to P5C, and then to proline via pyrroline-5-carboxylate reductases (PYCRs). PYCR3 is exclusively linked to the biosynthesis of proline from ornithine. The polypeptide is Pyrroline-5-carboxylate reductase 3 (Mus musculus (Mouse)).